We begin with the raw amino-acid sequence, 255 residues long: MSGNTALDYIQHHLTNLAVGEGYWTFHVDSLIMSFSLGALFCYLFWLGARRATAGVPSGLQNFVELMVEFVDQTTRETFQGKSRLIAPLALTIFCWIFLMNLMDLVPIDMVPSLMYAAGVDYFKILPTVDLNVTFALSISVFFLIIAYSFKGKGAGGFAKELLFHPFGPWLLPFNLILNIIELIAKPISLSLRLFGNMYAAELIFILISLLPWWIQWALGTPWAIFHILVIPLQAFIFMMLTVVYLSMANEHEEH.

The next 6 helical transmembrane spans lie at 28-48, 86-106, 125-145, 164-184, 203-223, and 224-244; these read VDSLIMSFSLGALFCYLFWLG, IAPLALTIFCWIFLMNLMDLV, ILPTVDLNVTFALSISVFFLI, FHPFGPWLLPFNLILNIIELI, LIFILISLLPWWIQWALGTPW, and AIFHILVIPLQAFIFMMLTVV.

It belongs to the ATPase A chain family. In terms of assembly, F-type ATPases have 2 components, CF(1) - the catalytic core - and CF(0) - the membrane proton channel. CF(1) has five subunits: alpha(3), beta(3), gamma(1), delta(1), epsilon(1). CF(0) has three main subunits: a(1), b(2) and c(9-12). The alpha and beta chains form an alternating ring which encloses part of the gamma chain. CF(1) is attached to CF(0) by a central stalk formed by the gamma and epsilon chains, while a peripheral stalk is formed by the delta and b chains.

The protein localises to the cell inner membrane. Key component of the proton channel; it plays a direct role in the translocation of protons across the membrane. This is ATP synthase subunit a from Alkalilimnicola ehrlichii (strain ATCC BAA-1101 / DSM 17681 / MLHE-1).